The following is a 509-amino-acid chain: MDEFQRNSNKHRSWQQFFLYPLFFREDLYAIAHYHHLDRSGSSEPTEILVSNFLSFLTVKRSIRRIRKQNNSISLLGNSDSNKLIEYNKNSSFQLILEGFTIXLEVXXXXRSKHFIKXMDGWNSXRSIHCIXXFMEAKLPHSNYISDLRVPYSIHPEILVRIFRRWIRDVPSLHLLRSILHEWKNSFNRENLQKALITQRENTRFSLFLWNSYVYECESFLIPLIKRILNSQSLLYGSFPDRTHFEKKIKDIVIFPPHKISTKKIWLLKDSFIHYVRYGERSLIALKGTHLQVKKCRYHLFHFWQYYFHLWFQPYRICSLELSKTSFSFLGFFMHVKMRPLVVRAKMLDDLFITDLITNELNSTAPIRSILFSLAKEKFCDISGWPISKLSWTSLSDDDILDRFDRIWINLFHYYSGSINQDGLYHIKYILLLSCAKTLACKHKSTIRVIREQLGSELFTKSFSKEREFISSSSSKTRLQRERIWNLEIXQINPLANFWQKMQNKQIKN.

This sequence belongs to the intron maturase 2 family. MatK subfamily.

The protein localises to the plastid. The protein resides in the chloroplast. Its function is as follows. Usually encoded in the trnK tRNA gene intron. Probably assists in splicing its own and other chloroplast group II introns. This Chamaecyparis obtusa (Hinoki false-cypress) protein is Maturase K.